We begin with the raw amino-acid sequence, 294 residues long: Protein PET54 (294 aa).

The protein resides in the mitochondrion inner membrane. Activator of specific mitochondrial mRNAs. PET54 is involved in the excision of intron aI5-beta from pre-mRNA for cytochrome c oxidase I (COX1) and plays a role in promoting the translation of COX3. This is Protein PET54 (PET54) from Saccharomyces bayanus (Yeast).